The following is an 84-amino-acid chain: Large ribosomal subunit protein bL27 (84 aa).

This sequence belongs to the bacterial ribosomal protein bL27 family.

In Karelsulcia muelleri (strain GWSS) (Sulcia muelleri), this protein is Large ribosomal subunit protein bL27.